We begin with the raw amino-acid sequence, 275 residues long: Large ribosomal subunit protein uL2 (275 aa).

Residues 224–257 (AMNPIDHPHGGGEGRTAAGRDPVSPWGTPTKGFR) form a disordered region.

The protein belongs to the universal ribosomal protein uL2 family. In terms of assembly, part of the 50S ribosomal subunit. Forms a bridge to the 30S subunit in the 70S ribosome.

Functionally, one of the primary rRNA binding proteins. Required for association of the 30S and 50S subunits to form the 70S ribosome, for tRNA binding and peptide bond formation. It has been suggested to have peptidyltransferase activity; this is somewhat controversial. Makes several contacts with the 16S rRNA in the 70S ribosome. This is Large ribosomal subunit protein uL2 from Burkholderia mallei (strain NCTC 10247).